The sequence spans 37 residues: Large ribosomal subunit protein bL36 (37 aa).

Belongs to the bacterial ribosomal protein bL36 family.

The chain is Large ribosomal subunit protein bL36 from Gloeothece citriformis (strain PCC 7424) (Cyanothece sp. (strain PCC 7424)).